The primary structure comprises 480 residues: Plant UBX domain-containing protein 10 (480 aa).

Disordered stretches follow at residues 47-78 (DASS…PRGI) and 335-383 (ADQA…AARV). Positions 330-389 (RAALEADQAREQQRQEEKERLEREAAEAERKLKEEEEARERAAREAEERQAARVRMRQEK) form a coiled coil. A compositionally biased stretch (basic and acidic residues) spans 336–383 (DQAREQQRQEEKERLEREAAEAERKLKEEEEARERAAREAEERQAARV). The UBX domain occupies 399 to 477 (KGPDVTQVLV…GLHPQASLFI (79 aa)).

This Arabidopsis thaliana (Mouse-ear cress) protein is Plant UBX domain-containing protein 10.